Reading from the N-terminus, the 300-residue chain is Ribokinase (300 aa).

Substrate is bound by residues 11–13, 39–43, and Glu-139; these read SMD and GKGAN. Residues Asn-183 and 210-215 each bind ATP; that span reads TLGSEG. Asp-236 and Thr-238 together coordinate K(+). 241-242 contributes to the ATP binding site; the sequence is GD. Residue Asp-242 coordinates substrate. Asp-242 functions as the Proton acceptor in the catalytic mechanism. K(+)-binding residues include Ser-272, Lys-275, and Gly-277.

Belongs to the carbohydrate kinase PfkB family. Ribokinase subfamily. As to quaternary structure, homodimer. Mg(2+) serves as cofactor.

Its subcellular location is the cytoplasm. The catalysed reaction is D-ribose + ATP = D-ribose 5-phosphate + ADP + H(+). It functions in the pathway carbohydrate metabolism; D-ribose degradation; D-ribose 5-phosphate from beta-D-ribopyranose: step 2/2. Activated by a monovalent cation that binds near, but not in, the active site. The most likely occupant of the site in vivo is potassium. Ion binding induces a conformational change that may alter substrate affinity. In terms of biological role, catalyzes the phosphorylation of ribose at O-5 in a reaction requiring ATP and magnesium. The resulting D-ribose-5-phosphate can then be used either for sythesis of nucleotides, histidine, and tryptophan, or as a component of the pentose phosphate pathway. The polypeptide is Ribokinase (Lactococcus lactis subsp. lactis (strain IL1403) (Streptococcus lactis)).